Consider the following 190-residue polypeptide: UPF0301 protein PSPPH_0476 (190 aa).

It belongs to the UPF0301 (AlgH) family.

This is UPF0301 protein PSPPH_0476 from Pseudomonas savastanoi pv. phaseolicola (strain 1448A / Race 6) (Pseudomonas syringae pv. phaseolicola (strain 1448A / Race 6)).